The following is a 307-amino-acid chain: D-alanine--D-alanine ligase (307 aa).

The 194-residue stretch at 108-301 (KEVFAAAGLP…FPEFCAWMVE (194 aa)) folds into the ATP-grasp domain. 135 to 185 (LPPPYVVKPNCEGSSVGVYIVQADANGPPRLAPDMPRDLMVETYIPGRELT) provides a ligand contact to ATP. Residues D252, E268, and N270 each coordinate Mg(2+).

The protein belongs to the D-alanine--D-alanine ligase family. The cofactor is Mg(2+). Requires Mn(2+) as cofactor.

It is found in the cytoplasm. The catalysed reaction is 2 D-alanine + ATP = D-alanyl-D-alanine + ADP + phosphate + H(+). It participates in cell wall biogenesis; peptidoglycan biosynthesis. Cell wall formation. This Cereibacter sphaeroides (strain ATCC 17025 / ATH 2.4.3) (Rhodobacter sphaeroides) protein is D-alanine--D-alanine ligase.